Consider the following 435-residue polypeptide: Phosphomethylpyrimidine synthase (435 aa).

Residues Asn67, Met96, Tyr125, His163, 185–187 (SRG), 226–229 (DGLR), and Glu265 contribute to the substrate site. His269 contacts Zn(2+). Position 292 (Tyr292) interacts with substrate. Residue His333 coordinates Zn(2+). Positions 408, 411, and 415 each coordinate [4Fe-4S] cluster.

This sequence belongs to the ThiC family. [4Fe-4S] cluster is required as a cofactor.

The enzyme catalyses 5-amino-1-(5-phospho-beta-D-ribosyl)imidazole + S-adenosyl-L-methionine = 4-amino-2-methyl-5-(phosphooxymethyl)pyrimidine + CO + 5'-deoxyadenosine + formate + L-methionine + 3 H(+). Its pathway is cofactor biosynthesis; thiamine diphosphate biosynthesis. Catalyzes the synthesis of the hydroxymethylpyrimidine phosphate (HMP-P) moiety of thiamine from aminoimidazole ribotide (AIR) in a radical S-adenosyl-L-methionine (SAM)-dependent reaction. The chain is Phosphomethylpyrimidine synthase from Thermus thermophilus (strain ATCC 27634 / DSM 579 / HB8).